Reading from the N-terminus, the 156-residue chain is Ribosome maturation factor RimP (156 aa).

The protein belongs to the RimP family.

It localises to the cytoplasm. Its function is as follows. Required for maturation of 30S ribosomal subunits. This is Ribosome maturation factor RimP from Oenococcus oeni (strain ATCC BAA-331 / PSU-1).